The following is a 63-amino-acid chain: Putative transmembrane protein ORF63 (63 aa).

The Extracellular portion of the chain corresponds to 1–8 (MQSGNFTL). A helical membrane pass occupies residues 9 to 29 (EVIMYLINSILAFIMIFFTFV). The Cytoplasmic portion of the chain corresponds to 30-31 (NP). A helical transmembrane segment spans residues 32–52 (SLLKCQYWTYILVALITAIIF). Over 53-63 (HTGSKVGKSSG) the chain is Extracellular.

The protein localises to the host membrane. The sequence is that of Putative transmembrane protein ORF63 from Acidianus filamentous virus 1 (isolate United States/Yellowstone) (AFV-1).